A 1690-amino-acid polypeptide reads, in one-letter code: Collagen alpha-4(IV) chain (1690 aa).

A signal peptide spans 1 to 38; sequence MWSLHIVLMRCSFRLTKSLATGPWSLILILFSVQYVYG. The interval 39–64 is 7S domain; sequence SGKKYIGPCGGRDCSVCHCVPEKGSR. Disordered regions lie at residues 61-173 and 187-258; these read KGSR…GEKG and GDRG…GPTL. Residues 65–1459 form a triple-helical region region; sequence GPPGPPGPQG…IGDPGPKGFG (1395 aa). Residues 66–75 are compositionally biased toward pro residues; the sequence is PPGPPGPQGP. A compositionally biased stretch (low complexity) spans 76-88; it reads IGPLGAPGPIGLS. Positions 94–96 match the Cell attachment site motif; it reads RGD. N-linked (GlcNAc...) asparagine glycosylation occurs at Asn-142. Residues 145 to 147 carry the Cell attachment site motif; it reads RGD. Residues 149 to 164 are compositionally biased toward gly residues; sequence GFPGGRGALGPGGPLG. Positions 189–191 match the Cell attachment site motif; it reads RGD. The span at 199–208 shows a compositional bias: gly residues; it reads GSWGAGGPAG. Residues 310–312 carry the Cell attachment site motif; that stretch reads RGD. Disordered regions lie at residues 369-390, 405-451, and 469-1457; these read PGDP…PGPP, GPPG…GLQG, and GIKG…GPKG. Residues 412–434 are compositionally biased toward low complexity; sequence FPGLPGLPGEAGIPGRPDSAPGK. 2 stretches are compositionally biased toward pro residues: residues 498–507 and 529–540; these read PMGPPGPPGL and PGPPGAEGPPGL. Residues 586 to 607 show a composition bias toward basic and acidic residues; that stretch reads HGRDGHAGEKGDPGPPGDHEDA. The span at 644-655 shows a compositional bias: low complexity; the sequence is PGVPGHPGVRGP. A glycan (N-linked (GlcNAc...) asparagine) is linked at Asn-669. Residues 681–690 show a composition bias toward pro residues; that stretch reads FDGPPGPKGF. 2 consecutive short sequence motifs (cell attachment site) follow at residues 724 to 726 and 785 to 787; these read RGD. Over residues 849-858 the composition is skewed to gly residues; the sequence is GAPGGKGQPG. Composition is skewed to low complexity over residues 866–880 and 907–917; these read AGMK…RPGA and PRGLPGFPGFP. Positions 989-991 match the Cell attachment site motif; it reads RGD. Over residues 1023–1032 the composition is skewed to pro residues; that stretch reads PGPPGPPGPP. A compositionally biased stretch (low complexity) spans 1108-1117; that stretch reads PGIQGPRGSP. Over residues 1119 to 1131 the composition is skewed to pro residues; that stretch reads RPGPPGSSGPPGC. The Cell attachment site motif lies at 1212–1214; that stretch reads RGD. Pro residues-rich tracts occupy residues 1220–1243, 1256–1280, 1297–1309, 1338–1353, and 1443–1452; these read ISPP…PPGP, DPGP…PPGL, PGPP…PGPP, FPGP…PPGR, and GPGPPGPIGD. Positions 1465–1690 constitute a Collagen IV NC1 domain; that stretch reads GFLLVLHSQT…SRCQVCVKYS (226 aa). 6 disulfides stabilise this stretch: Cys-1480–Cys-1569, Cys-1513–Cys-1566, Cys-1525–Cys-1531, Cys-1588–Cys-1686, Cys-1622–Cys-1683, and Cys-1634–Cys-1641.

This sequence belongs to the type IV collagen family. In terms of assembly, there are six type IV collagen isoforms, alpha 1(IV)-alpha 6(IV), each of which can form a triple helix structure with 2 other chains to generate type IV collagen network. The alpha 3(IV) chain forms a triple helical protomer with alpha 4(IV) and alpha 5(IV); this triple helical structure dimerizes through NC1-NC1 domain interactions such that the alpha 3(IV), alpha 4(IV) and alpha 5(IV) chains of one protomer connect with the alpha 5(IV), alpha 4(IV) and alpha 3(IV) chains of the opposite protomer, respectively. Associates with LAMB2 at the neuromuscular junction and in GBM. Prolines at the third position of the tripeptide repeating unit (G-X-Y) are hydroxylated in some or all of the chains. In terms of processing, type IV collagens contain numerous cysteine residues which are involved in inter- and intramolecular disulfide bonding. 12 of these, located in the NC1 domain, are conserved in all known type IV collagens. Post-translationally, the trimeric structure of the NC1 domains is stabilized by covalent bonds between Lys and Met residues. In terms of tissue distribution, expressed in Bruch's membrane, outer plexiform layer, inner nuclear layer, inner plexiform layer, ganglion cell layer, inner limiting membrane and around the blood vessels of the retina (at protein level). Alpha 3 and alpha 4 type IV collagens are colocalized and present in kidney, eye, basement membranes of lens capsule, cochlea, lung, skeletal muscle, aorta, synaptic fibers, fetal kidney and fetal lung. PubMed:8083201 reports similar levels of expression of alpha 3 and alpha 4 type IV collagens in kidney, but PubMed:7523402 reports that in kidney levels of alpha 3 type IV collagen are significantly lower than those of alpha 4 type IV collagen. Highest levels of expression of alpha 4 type IV collagen are detected in kidney, calvaria, neuroretina and cardiac muscle. Lower levels of expression are observed in brain, lung and thymus, and no expression is detected in choroid plexus, liver, adrenal, pancreas, ileum or skin.

It is found in the secreted. The protein resides in the extracellular space. It localises to the extracellular matrix. The protein localises to the basement membrane. Functionally, type IV collagen is the major structural component of glomerular basement membranes (GBM), forming a 'chicken-wire' meshwork together with laminins, proteoglycans and entactin/nidogen. This chain is Collagen alpha-4(IV) chain (COL4A4), found in Homo sapiens (Human).